Consider the following 97-residue polypeptide: MEMKIDALAGTLESSDVMVRIGPAAQPGIQLEIDSIVKQQFGAAIEQVVRETLAQLGVKQANVVVDDKGALECVLRARVQAAALRAAQQTQLQWSQL.

An O-(phosphoribosyl dephospho-coenzyme A)serine modification is found at Ser-14.

Belongs to the CitD family. In terms of assembly, oligomer with a subunit composition of (alpha,beta,gamma)6.

It localises to the cytoplasm. Functionally, covalent carrier of the coenzyme of citrate lyase. The polypeptide is Citrate lyase acyl carrier protein (Klebsiella pneumoniae subsp. pneumoniae (strain ATCC 700721 / MGH 78578)).